A 365-amino-acid chain; its full sequence is Sulfate/thiosulfate import ATP-binding protein CysA (365 aa).

Positions 3 to 237 constitute an ABC transporter domain; the sequence is IEIANIKKSF…PATRFVLEFM (235 aa). 35 to 42 serves as a coordination point for ATP; it reads GPSGSGKT.

The protein belongs to the ABC transporter superfamily. Sulfate/tungstate importer (TC 3.A.1.6) family. As to quaternary structure, the complex is composed of two ATP-binding proteins (CysA), two transmembrane proteins (CysT and CysW) and a solute-binding protein (CysP).

It is found in the cell inner membrane. It carries out the reaction sulfate(out) + ATP + H2O = sulfate(in) + ADP + phosphate + H(+). The catalysed reaction is thiosulfate(out) + ATP + H2O = thiosulfate(in) + ADP + phosphate + H(+). In terms of biological role, part of the ABC transporter complex CysAWTP involved in sulfate/thiosulfate import. Responsible for energy coupling to the transport system. This chain is Sulfate/thiosulfate import ATP-binding protein CysA, found in Escherichia coli O157:H7.